The chain runs to 167 residues: T-cell surface glycoprotein CD3 delta chain (167 aa).

Residues 1–21 form the signal peptide; that stretch reads MEHSRCLSCLILAALLSQVNP. Residues 22 to 100 lie on the Extracellular side of the membrane; sequence RALEVLEAED…NCVELDSATL (79 aa). Cys-37 and Cys-73 form a disulfide bridge. Residues Asn-38 and Asn-55 are each glycosylated (N-linked (GlcNAc...) asparagine). A helical transmembrane segment spans residues 101 to 121; the sequence is AGLIITDIIATVLLALGVYCF. Over 122 to 167 the chain is Cytoplasmic; it reads AGHETGRFSRAADTQVLMGNDQLYQPLRERNDAQYSRLGDKWARNK. The ITAM domain maps to 134–162; it reads DTQVLMGNDQLYQPLRERNDAQYSRLGDK. A phosphotyrosine mark is found at Tyr-145 and Tyr-156.

In terms of assembly, the TCR-CD3 complex is composed of a CD3D/CD3E and a CD3G/CD3E heterodimers that preferentially associate with TCRalpha and TCRbeta, respectively, to form TCRalpha/CD3E/CD3G and TCRbeta/CD3G/CD3E trimers. In turn, the hexamer interacts with CD3Z homodimer to form the TCR-CD3 complex. Alternatively, TCRalpha and TCRbeta can be replaced by TCRgamma and TCRdelta. Interacts with coreceptors CD4 and CD8. Phosphorylated on Tyr residues after T-cell receptor triggering by LCK in association with CD4/CD8. CD3D is mostly present on T-lymphocytes with its TCR-CD3 partners. Present also in fetal NK-cells.

It localises to the cell membrane. Part of the TCR-CD3 complex present on T-lymphocyte cell surface that plays an essential role in adaptive immune response. When antigen presenting cells (APCs) activate T-cell receptor (TCR), TCR-mediated signals are transmitted across the cell membrane by the CD3 chains CD3D, CD3E, CD3G and CD3Z. All CD3 chains contain immunoreceptor tyrosine-based activation motifs (ITAMs) in their cytoplasmic domain. Upon TCR engagement, these motifs become phosphorylated by Src family protein tyrosine kinases LCK and FYN, resulting in the activation of downstream signaling pathways. In addition of this role of signal transduction in T-cell activation, CD3D plays an essential role in thymocyte differentiation. Indeed, participates in correct intracellular TCR-CD3 complex assembly and surface expression. In absence of a functional TCR-CD3 complex, thymocytes are unable to differentiate properly. Interacts with CD4 and CD8 and thus serves to establish a functional link between the TCR and coreceptors CD4 and CD8, which is needed for activation and positive selection of CD4 or CD8 T-cells. This chain is T-cell surface glycoprotein CD3 delta chain (CD3D), found in Ovis aries (Sheep).